The primary structure comprises 335 residues: Large ribosomal subunit protein uL3 (335 aa).

Belongs to the universal ribosomal protein uL3 family. As to quaternary structure, part of the 50S ribosomal subunit. Forms a cluster with proteins L14 and L24e.

Its function is as follows. One of the primary rRNA binding proteins, it binds directly near the 3'-end of the 23S rRNA, where it nucleates assembly of the 50S subunit. The chain is Large ribosomal subunit protein uL3 from Methanocaldococcus jannaschii (strain ATCC 43067 / DSM 2661 / JAL-1 / JCM 10045 / NBRC 100440) (Methanococcus jannaschii).